Here is a 184-residue protein sequence, read N- to C-terminus: UPF0149 protein PputW619_5026 (184 aa).

This sequence belongs to the UPF0149 family.

The sequence is that of UPF0149 protein PputW619_5026 from Pseudomonas putida (strain W619).